Consider the following 102-residue polypeptide: Large ribosomal subunit protein uL24c (102 aa).

This sequence belongs to the universal ribosomal protein uL24 family. As to quaternary structure, part of the 50S ribosomal subunit.

Its subcellular location is the plastid. The protein resides in the chloroplast. Functionally, one of two assembly initiator proteins, it binds directly to the 5'-end of the 23S rRNA, where it nucleates assembly of the 50S subunit. This is Large ribosomal subunit protein uL24c (rpl24) from Rhodomonas salina (Cryptomonas salina).